The following is a 341-amino-acid chain: L-threonine 3-dehydrogenase (341 aa).

Cys38 is a Zn(2+) binding site. Residues Thr40 and His43 each act as charge relay system in the active site. His63, Glu64, Cys93, Cys96, Cys99, and Cys107 together coordinate Zn(2+). Residues Ile175, Asp195, Arg200, 262–264 (LGI), and 286–287 (IY) contribute to the NAD(+) site.

It belongs to the zinc-containing alcohol dehydrogenase family. Homotetramer. Zn(2+) is required as a cofactor.

It is found in the cytoplasm. It carries out the reaction L-threonine + NAD(+) = (2S)-2-amino-3-oxobutanoate + NADH + H(+). Its pathway is amino-acid degradation; L-threonine degradation via oxydo-reductase pathway; glycine from L-threonine: step 1/2. Its function is as follows. Catalyzes the NAD(+)-dependent oxidation of L-threonine to 2-amino-3-ketobutyrate. The chain is L-threonine 3-dehydrogenase from Escherichia coli (strain K12 / MC4100 / BW2952).